The following is a 262-amino-acid chain: Phosphatidylserine decarboxylase proenzyme (262 aa).

Catalysis depends on charge relay system; for autoendoproteolytic cleavage activity residues Asp86, His142, and Ser226. Ser226 serves as the catalytic Schiff-base intermediate with substrate; via pyruvic acid; for decarboxylase activity. Pyruvic acid (Ser); by autocatalysis is present on Ser226.

The protein belongs to the phosphatidylserine decarboxylase family. PSD-B subfamily. Prokaryotic type I sub-subfamily. In terms of assembly, heterodimer of a large membrane-associated beta subunit and a small pyruvoyl-containing alpha subunit. Pyruvate serves as cofactor. Is synthesized initially as an inactive proenzyme. Formation of the active enzyme involves a self-maturation process in which the active site pyruvoyl group is generated from an internal serine residue via an autocatalytic post-translational modification. Two non-identical subunits are generated from the proenzyme in this reaction, and the pyruvate is formed at the N-terminus of the alpha chain, which is derived from the carboxyl end of the proenzyme. The autoendoproteolytic cleavage occurs by a canonical serine protease mechanism, in which the side chain hydroxyl group of the serine supplies its oxygen atom to form the C-terminus of the beta chain, while the remainder of the serine residue undergoes an oxidative deamination to produce ammonia and the pyruvoyl prosthetic group on the alpha chain. During this reaction, the Ser that is part of the protease active site of the proenzyme becomes the pyruvoyl prosthetic group, which constitutes an essential element of the active site of the mature decarboxylase.

It localises to the cell membrane. It carries out the reaction a 1,2-diacyl-sn-glycero-3-phospho-L-serine + H(+) = a 1,2-diacyl-sn-glycero-3-phosphoethanolamine + CO2. It participates in phospholipid metabolism; phosphatidylethanolamine biosynthesis; phosphatidylethanolamine from CDP-diacylglycerol: step 2/2. Catalyzes the formation of phosphatidylethanolamine (PtdEtn) from phosphatidylserine (PtdSer). This is Phosphatidylserine decarboxylase proenzyme from Bacillus cereus (strain ZK / E33L).